Here is a 241-residue protein sequence, read N- to C-terminus: ATP synthase subunit a (241 aa).

8 consecutive transmembrane segments (helical) span residues 29–49 (NSSLFMMISVILVILFLLFGI), 54–74 (VIPGYLQAAVEYVYDFVISII), 86–106 (IPLIFTVFIFILSCNLVGVLP), 114–134 (HVIVTFALSMVVFIYITIVGF), 153–173 (WLAPIIIIIKLFAYLVRPVSL), 177–197 (LAANMIAGHTIIKVIAGFIVN), 200–220 (IFFTPAPFLFIIALIGFEVFV), and 221–241 (AILQAYIFTILTCVYLSDAVK).

It belongs to the ATPase A chain family. F-type ATPases have 2 components, CF(1) - the catalytic core - and CF(0) - the membrane proton channel. CF(1) has five subunits: alpha(3), beta(3), gamma(1), delta(1), epsilon(1). CF(0) has three main subunits: a(1), b(2) and c(9-12). The alpha and beta chains form an alternating ring which encloses part of the gamma chain. CF(1) is attached to CF(0) by a central stalk formed by the gamma and epsilon chains, while a peripheral stalk is formed by the delta and b chains.

Its subcellular location is the cell inner membrane. In terms of biological role, key component of the proton channel; it plays a direct role in the translocation of protons across the membrane. This is ATP synthase subunit a from Wolbachia sp. subsp. Drosophila simulans (strain wRi).